Consider the following 304-residue polypeptide: Glutaminase (304 aa).

The substrate site is built by Ser-63, Asn-114, Glu-158, Asn-165, Tyr-189, Tyr-240, and Val-258.

It belongs to the glutaminase family. In terms of assembly, homotetramer.

It catalyses the reaction L-glutamine + H2O = L-glutamate + NH4(+). This Shewanella baltica (strain OS223) protein is Glutaminase.